We begin with the raw amino-acid sequence, 225 residues long: GrpE protein homolog 2, mitochondrial (225 aa).

The N-terminal 32 residues, 1–32 (MAVRSLWACRLRVQRLLAWSAAWESKGWPLPF), are a transit peptide targeting the mitochondrion. The residue at position 142 (Lys142) is an N6-acetyllysine.

It belongs to the GrpE family. Probable component of the PAM complex at least composed of a mitochondrial HSP70 protein, GRPEL1 or GRPEL2, TIMM44, TIMM16/PAM16 and TIMM14/DNAJC19.

It localises to the mitochondrion matrix. Its function is as follows. Essential component of the PAM complex, a complex required for the translocation of transit peptide-containing proteins from the inner membrane into the mitochondrial matrix in an ATP-dependent manner. Seems to control the nucleotide-dependent binding of mitochondrial HSP70 to substrate proteins. Stimulates ATPase activity of mt-HSP70. May also serve to modulate the interconversion of oligomeric (inactive) and monomeric (active) forms of mt-HSP70. The polypeptide is GrpE protein homolog 2, mitochondrial (GRPEL2) (Pongo abelii (Sumatran orangutan)).